The following is a 471-amino-acid chain: Anthranilate 1,2-dioxygenase large subunit (471 aa).

The region spanning 52–160 (IYACHESEIP…IASYRGFVFV (109 aa)) is the Rieske domain. [2Fe-2S] cluster contacts are provided by Cys93, His95, Cys113, and His116. His220, His225, and Asp379 together coordinate Fe cation.

The protein belongs to the bacterial ring-hydroxylating dioxygenase alpha subunit family. The anthranilate dioxygenase (AntDO) multicomponent enzyme system is composed of an oxygenase component and a NADH:acceptor reductase component (AntC). The oxygenase component is a heterohexamer of 3 large (AntA) and 3 small (AntB) subunits. Requires Fe cation as cofactor. [2Fe-2S] cluster serves as cofactor.

The catalysed reaction is anthranilate + NADH + O2 + 3 H(+) = catechol + NH4(+) + CO2 + NAD(+). It catalyses the reaction anthranilate + NADPH + O2 + 3 H(+) = catechol + NH4(+) + CO2 + NADP(+). The protein operates within aromatic compound metabolism; anthranilate degradation via hydroxylation; catechol from anthranilate: step 1/1. Its function is as follows. Component of anthranilate dioxygenase multicomponent enzyme system which catalyzes the incorporation of both atoms of molecular oxygen into anthranilate to form catechol. This Acinetobacter baylyi (strain ATCC 33305 / BD413 / ADP1) protein is Anthranilate 1,2-dioxygenase large subunit.